Here is a 562-residue protein sequence, read N- to C-terminus: MDWKEAIPGAAKVAIETKDYITYSTLLELILEEARIKDIDEQRELIKCLHEELKQEKNDHITREISWDIIGMVLPYVGKVQNEADEFVDFLAKNGNPREVFLKCCELLINGGFESPQQFISLNSAILSALHRISTKRPVLFVNNFLISLFSGLANILQIDSDELYCVWKISISSIQDAMHRFPVSECYLACLKACSILAQLFLSKETLMLSFRSLLQTKDQYAEFREELSGATTNCDKLDTLSKSIINIFDYLLSHLPESWSIITEHMAQELTKATYVSQSSSISSEDEEIAKNADVPAEVDNNSTKADDKRDEIEFDTKGCLALLTIKSFYQSGNFFLDFLKEKFPSTILETLQQLVSWEIQLDSVGFKDIAVYQGYLLDLPHFQVPDSELEHLSSLLHGYHFMASSTELPWLRVTCNAIVTKCLDSQLPSVRLSYILDTLEECPLLNIKTAILNYYQKQCSLVKDSNEEGLKNFVSPNTLLDVFKVFDAMEDVELDSQSLSYIHQTLVFLYSLEIQNLLSQNQFPTVYFTKISDQINNYEGELPTDGLKYYIELLNSRNK.

2 positions are modified to phosphoserine: Ser285 and Ser286. The interval 288-308 (DEEIAKNADVPAEVDNNSTKA) is disordered.

It belongs to the UPF0649 family.

It is found in the cytoplasm. The protein localises to the nucleus. This is UPF0649 protein C1442.02 from Schizosaccharomyces pombe (strain 972 / ATCC 24843) (Fission yeast).